The primary structure comprises 490 residues: ATP synthase subunit beta, chloroplastic (490 aa).

Position 170 to 177 (170 to 177 (GGAGVGKT)) interacts with ATP.

The protein belongs to the ATPase alpha/beta chains family. F-type ATPases have 2 components, CF(1) - the catalytic core - and CF(0) - the membrane proton channel. CF(1) has five subunits: alpha(3), beta(3), gamma(1), delta(1), epsilon(1). CF(0) has four main subunits: a(1), b(1), b'(1) and c(9-12).

It localises to the plastid. Its subcellular location is the chloroplast thylakoid membrane. The enzyme catalyses ATP + H2O + 4 H(+)(in) = ADP + phosphate + 5 H(+)(out). Functionally, produces ATP from ADP in the presence of a proton gradient across the membrane. The catalytic sites are hosted primarily by the beta subunits. The sequence is that of ATP synthase subunit beta, chloroplastic from Convolvulus arvensis (Field bindweed).